Consider the following 327-residue polypeptide: rRNA 2'-O-methyltransferase fibrillarin (327 aa).

The tract at residues 1-95 (MKPGFSPRGG…NQSGKNVMVE (95 aa)) is disordered. A compositionally biased stretch (gly residues) spans 7 to 80 (PRGGGFGGRG…GGNRGRGGGR (74 aa)). Asymmetric dimethylarginine is present on residues arginine 8, arginine 15, arginine 21, arginine 24, arginine 28, and arginine 31. Glycyl lysine isopeptide (Lys-Gly) (interchain with G-Cter in SUMO2) cross-links involve residues lysine 90, lysine 108, and lysine 115. Lysine 108 is subject to N6-acetyllysine. At serine 122 the chain carries Phosphoserine. At lysine 127 the chain carries N6-acetyllysine. Serine 130 and serine 132 each carry phosphoserine. Residues lysine 137, lysine 149, and lysine 164 each participate in a glycyl lysine isopeptide (Lys-Gly) (interchain with G-Cter in SUMO2) cross-link. S-adenosyl-L-methionine contacts are provided by residues 178 to 179 (TT) and 197 to 198 (EF). Residues lysine 211 and lysine 212 each carry the N6-acetyllysine modification. Residues 222–223 (DA) and 242–245 (DVAQ) each bind S-adenosyl-L-methionine.

Belongs to the methyltransferase superfamily. Fibrillarin family. Component of box C/D small nucleolar ribonucleoprotein (snoRNP) particles that contain SNU13, FBL, NOP5 and NOP56, plus a guide RNA. It is associated with the U3, U8, U13, X and Y small nuclear RNAs. Component of several ribosomal and nucleolar protein complexes. Part of the small subunit (SSU) processome, composed of more than 70 proteins and the RNA chaperone small nucleolar RNA (snoRNA) U3. Interacts with PRMT5 and UTP20. Interacts with DDX5 and C1QBP. Interacts with NOL11. Interacts with PIH1D1. Interacts with RRP1B. Interacts with NOLC1. Interacts with SDE2. Interacts with NOP2 and NOP56. In terms of processing, by homology to other fibrillarins, some or all of the N-terminal domain arginines are modified to asymmetric dimethylarginine (DMA). Ubiquitinated. Ubiquitination leads to proteasomal degradation. Deubiquitinated by USP36. Post-translationally, acetylated by CREBBP/CBP, preventing methylation of 'Gln-105' of histone H2A (H2AQ104me), without affecting rRNA methylation. Deacetylation by SIRT7 restores methylation of 'Gln-105' of histone H2A (H2AQ104me).

The protein localises to the nucleus. Its subcellular location is the nucleolus. It is found in the nucleoplasm. The catalysed reaction is L-glutaminyl-[histone H2A] + S-adenosyl-L-methionine = N(5)-methyl-L-glutaminyl-[histone H2A] + S-adenosyl-L-homocysteine + H(+). It catalyses the reaction a ribonucleotide in rRNA + S-adenosyl-L-methionine = a 2'-O-methylribonucleotide in rRNA + S-adenosyl-L-homocysteine + H(+). It carries out the reaction a ribonucleotide in U6 snRNA + S-adenosyl-L-methionine = a 2'-O-methylribonucleotide in U6 snRNA + S-adenosyl-L-homocysteine + H(+). In terms of biological role, S-adenosyl-L-methionine-dependent methyltransferase that has the ability to methylate both RNAs and proteins. Involved in pre-rRNA processing by catalyzing the site-specific 2'-hydroxyl methylation of ribose moieties in pre-ribosomal RNA. Site specificity is provided by a guide RNA that base pairs with the substrate. Methylation occurs at a characteristic distance from the sequence involved in base pairing with the guide RNA. Probably catalyzes 2'-O-methylation of U6 snRNAs in box C/D RNP complexes. U6 snRNA 2'-O-methylation is required for mRNA splicing fidelity. Also acts as a protein methyltransferase by mediating methylation of 'Gln-105' of histone H2A (H2AQ104me), a modification that impairs binding of the FACT complex and is specifically present at 35S ribosomal DNA locus. Part of the small subunit (SSU) processome, first precursor of the small eukaryotic ribosomal subunit. During the assembly of the SSU processome in the nucleolus, many ribosome biogenesis factors, an RNA chaperone and ribosomal proteins associate with the nascent pre-rRNA and work in concert to generate RNA folding, modifications, rearrangements and cleavage as well as targeted degradation of pre-ribosomal RNA by the RNA exosome. This chain is rRNA 2'-O-methyltransferase fibrillarin, found in Mus musculus (Mouse).